The sequence spans 145 residues: uncharacterized protein (145 aa).

One can recognise a CBM3 domain in the interval 1–145; that stretch reads LQYRAADTNA…NGQIVWGTAP (145 aa).

This is an uncharacterized protein from Paenibacillus lautus (Bacillus lautus).